We begin with the raw amino-acid sequence, 538 residues long: Probable folate-biopterin transporter 9, chloroplastic (538 aa).

The transit peptide at 1–57 (MNNPLLSISNPVKFFKPPIPYRISLNTTINKKQKHQSKTLVVKSNKRSTTSLTSSVS) directs the protein to the chloroplast. 12 consecutive transmembrane segments (helical) span residues 85-105 (VLLC…WLAL), 129-149 (LPMV…IGGA), 152-172 (VPYI…LAIF), 178-198 (VLPS…ITEV), 220-240 (ALMA…YCLL), 246-266 (ILFL…LSSK), 309-329 (LIWI…VFCY), 339-359 (SVIG…TVVY), 370-390 (ALIH…YILV), 395-415 (LAFG…AEIL), 447-467 (LCLS…MIGI), and 479-499 (ILIQ…VPML).

It belongs to the major facilitator superfamily. Folate-biopterin transporter (TC 2.A.71) family.

The protein localises to the plastid. Its subcellular location is the chloroplast membrane. In terms of biological role, could mediate folate transport. The protein is Probable folate-biopterin transporter 9, chloroplastic of Arabidopsis thaliana (Mouse-ear cress).